A 198-amino-acid polypeptide reads, in one-letter code: Glycerol-3-phosphate acyltransferase (198 aa).

5 consecutive transmembrane segments (helical) span residues 5–25 (LILL…LWIG), 56–76 (SIVT…PFFF), 84–104 (FWLL…FAGF), 114–134 (AGVI…VFLV), and 158–178 (LFMG…FVIW).

It belongs to the PlsY family. In terms of assembly, probably interacts with PlsX.

It is found in the cell membrane. The catalysed reaction is an acyl phosphate + sn-glycerol 3-phosphate = a 1-acyl-sn-glycero-3-phosphate + phosphate. It functions in the pathway lipid metabolism; phospholipid metabolism. Catalyzes the transfer of an acyl group from acyl-phosphate (acyl-PO(4)) to glycerol-3-phosphate (G3P) to form lysophosphatidic acid (LPA). This enzyme utilizes acyl-phosphate as fatty acyl donor, but not acyl-CoA or acyl-ACP. The sequence is that of Glycerol-3-phosphate acyltransferase from Listeria monocytogenes serovar 1/2a (strain ATCC BAA-679 / EGD-e).